The primary structure comprises 205 residues: Small ribosomal subunit protein uS4 (205 aa).

Residues Met-1 to Ser-46 form a disordered region. In terms of domain architecture, S4 RNA-binding spans Ser-94–Leu-154.

Belongs to the universal ribosomal protein uS4 family. As to quaternary structure, part of the 30S ribosomal subunit. Contacts protein S5. The interaction surface between S4 and S5 is involved in control of translational fidelity.

Its function is as follows. One of the primary rRNA binding proteins, it binds directly to 16S rRNA where it nucleates assembly of the body of the 30S subunit. Functionally, with S5 and S12 plays an important role in translational accuracy. The polypeptide is Small ribosomal subunit protein uS4 (Allorhizobium ampelinum (strain ATCC BAA-846 / DSM 112012 / S4) (Agrobacterium vitis (strain S4))).